Reading from the N-terminus, the 171-residue chain is Lipoprotein signal peptidase (171 aa).

Transmembrane regions (helical) follow at residues 12-32 (LAWL…KLYF), 42-62 (IVVI…AAFS), 70-90 (WQRW…VVWL), and 96-116 (NETW…GNLY). Active-site residues include Asp-126 and Asp-145. A helical transmembrane segment spans residues 137-157 (YFPAFNVADSAITVGAVMLAL).

The protein belongs to the peptidase A8 family.

The protein resides in the cell inner membrane. The enzyme catalyses Release of signal peptides from bacterial membrane prolipoproteins. Hydrolyzes -Xaa-Yaa-Zaa-|-(S,diacylglyceryl)Cys-, in which Xaa is hydrophobic (preferably Leu), and Yaa (Ala or Ser) and Zaa (Gly or Ala) have small, neutral side chains.. Its pathway is protein modification; lipoprotein biosynthesis (signal peptide cleavage). This protein specifically catalyzes the removal of signal peptides from prolipoproteins. This Pseudomonas putida (strain ATCC 47054 / DSM 6125 / CFBP 8728 / NCIMB 11950 / KT2440) protein is Lipoprotein signal peptidase.